The primary structure comprises 602 residues: Glutamine--fructose-6-phosphate aminotransferase [isomerizing] (602 aa).

Catalysis depends on Cys2, which acts as the Nucleophile; for GATase activity. In terms of domain architecture, Glutamine amidotransferase type-2 spans 2-219 (CGIIGYIGDR…DGEYAILTKD (218 aa)). 2 SIS domains span residues 280-420 (VAEE…VLGT) and 453-592 (LAET…PDKP). Lys597 (for Fru-6P isomerization activity) is an active-site residue.

Homodimer.

It is found in the cytoplasm. The enzyme catalyses D-fructose 6-phosphate + L-glutamine = D-glucosamine 6-phosphate + L-glutamate. Functionally, catalyzes the first step in hexosamine metabolism, converting fructose-6P into glucosamine-6P using glutamine as a nitrogen source. In Thermococcus kodakarensis (strain ATCC BAA-918 / JCM 12380 / KOD1) (Pyrococcus kodakaraensis (strain KOD1)), this protein is Glutamine--fructose-6-phosphate aminotransferase [isomerizing].